We begin with the raw amino-acid sequence, 919 residues long: MTAPWRRLRSLVWEYWAGFLVCAFWIPDSRGMPHVIRIGGIFEYADGPNAQVMNAEEHAFRFSANIINRNRTLLPNTTLTYDIQRIHFHDSFEATKKACDQLALGVVAIFGPSQGSCTNAVQSICNALEVPHIQLRWKHHPLDNKDTFYVNLYPDYASLSHAILDLVQSLKWRSATVVYDDSTGLIRLQELIMAPSRYNIRLKIRQLPIDSDDSRPLLKEMKRGREFRIIFDCSHTMAAQILKQAMAMGMMTEYYHFIFTTLDLYALDLEPYRYSGVNLTGFRILNVDNAHVSAIVEKWSMERLQAAPRAESGLLDGVMMTDAALLYDAVHIVSVCYQRASQMTVNSLQCHRHKPWRFGGRFMNFIKEAQWEGLTGRIVFNKTSGLRTDFDLDIISLKEDGLEKVGVWSPADGLNITEVAKGRGPNVTDSLTNRSLIVTTLLEEPFVMFRKSDRTLYGNDRFEGYCIDLLKELAHILGFSYEIRLVEDGKYGAQDDKGQWNGMVKELIDHKADLAVAPLTITHVREKAIDFSKPFMTLGVSILYRKPNGTNPSVFSFLNPLSPDIWMYVLLAYLGVSCVLFVIARFSPYEWYDAHPCNPGSEVVENNFTLLNSFWFGMGSLMQQGSELMPKALSTRIIGGIWWFFTLIIISSYTANLAAFLTVERMESPIDSADDLAKQTKIEYGAVKDGATMTFFKKSKISTFEKMWAFMSSKPSALVKNNEEGIQRTLTADYALLMESTTIEYITQRNCNLTQIGGLIDSKGYGIGTPMGSPYRDKITIAILQLQEEDKLHIMKEKWWRGSGCPEEENKEASALGIQKIGGIFIVLAAGLVLSVLVAVGEFIYKLRKTAEREQRSFCSTVADEIRFSLTCQRRLKHKPQPPMMVKTDAVINMHTFNDRRLPGKDSMSCSTSLAPVFP.

Positions 1-31 (MTAPWRRLRSLVWEYWAGFLVCAFWIPDSRG) are cleaved as a signal peptide. Topologically, residues 32–563 (MPHVIRIGGI…VFSFLNPLSP (532 aa)) are extracellular. Residues asparagine 70, asparagine 76, asparagine 278, asparagine 381, asparagine 415, asparagine 426, and asparagine 433 are each glycosylated (N-linked (GlcNAc...) asparagine). Cysteine 99 and cysteine 350 form a disulfide bridge. Proline 518, threonine 520, and arginine 525 together coordinate L-glutamate. Residues asparagine 548 and asparagine 551 are each glycosylated (N-linked (GlcNAc...) asparagine). The chain crosses the membrane as a helical span at residues 564–584 (DIWMYVLLAYLGVSCVLFVIA). Residues 585 to 636 (RFSPYEWYDAHPCNPGSEVVENNFTLLNSFWFGMGSLMQQGSELMPKALSTR) are Cytoplasmic-facing. The helical transmembrane segment at 637–657 (IIGGIWWFFTLIIISSYTANL) threads the bilayer. The Extracellular portion of the chain corresponds to 658–820 (AAFLTVERME…KEASALGIQK (163 aa)). Residues alanine 691, threonine 692, and glutamate 739 each contribute to the L-glutamate site. Asparagine 752 carries N-linked (GlcNAc...) asparagine glycosylation. Residues 821–841 (IGGIFIVLAAGLVLSVLVAVG) traverse the membrane as a helical segment. Residues 842-919 (EFIYKLRKTA…CSTSLAPVFP (78 aa)) are Cytoplasmic-facing. At serine 869 the chain carries Phosphoserine. Lysine 887 is covalently cross-linked (Glycyl lysine isopeptide (Lys-Gly) (interchain with G-Cter in SUMO1)).

The protein belongs to the glutamate-gated ion channel (TC 1.A.10.1) family. GRIK3 subfamily. Homotetramer, and heterotetramer with GRIK4 or GRIK5. Can form functional heteromeric receptors with GRIK2. Interacts with PRKCABP. Interacts with NETO2. As to quaternary structure, homomeric GluR7A forms functional kainate receptors which have very low sensitivity to glutamate. Can form functional heteromeric receptors with GRIK4 and GRIK5. In terms of assembly, homomeric GluR7B forms functional kainate receptors. In terms of processing, mass spectrometry data suggest the protein is N-glycosylated at five distinct sites. Expressed in the olfactory bulb (at protein level). Expressed in the deep cortical layers, dentate gyrus, reticular thalamic nucleus, mammillary bodies, pons, and cerebellum of the adult.

It localises to the cell membrane. It is found in the postsynaptic cell membrane. The enzyme catalyses Ca(2+)(in) = Ca(2+)(out). In terms of biological role, ionotropic glutamate receptor that functions as a cation-permeable ligand-gated ion channel, gated by L-glutamate and the glutamatergic agonist kainic acid. Binding of the excitatory neurotransmitter L-glutamate induces a conformation change, leading to the opening of the cation channel, and thereby converts the chemical signal to an electrical impulse. The receptor then desensitizes rapidly and enters a transient inactive state, characterized by the presence of bound agonist. In association with GRIK2, involved in presynaptic facilitation of glutamate release at hippocampal mossy fiber synapses. Ionotropic glutamate receptor that functions as a ligand-gated cation channel, gated by L-glutamate and the glutamatergic agonist kainic acid. In Rattus norvegicus (Rat), this protein is Glutamate receptor ionotropic, kainate 3 (Grik3).